The following is a 699-amino-acid chain: DnaJ homolog subfamily C member 14 (699 aa).

A disordered region spans residues Met1–Gln230. The span at His75 to Pro84 shows a compositional bias: pro residues. A compositionally biased stretch (acidic residues) spans Ala86–Val102. The segment covering Asp117–Gly133 has biased composition (polar residues). Acidic residues predominate over residues Gly163 to Glu176. Residues Pro203–Ser218 are compositionally biased toward basic and acidic residues. The span at Pro219 to Arg228 shows a compositional bias: basic residues. 3 helical membrane-spanning segments follow: residues Ala251 to Gly271, Gly301 to Phe321, and Leu327 to Trp347. Residues Asn444–Arg508 form the J domain. Residues Met655–Arg699 are disordered. Residues Ala662–Ala673 show a composition bias toward low complexity. The span at Pro687 to Arg699 shows a compositional bias: basic residues.

In terms of assembly, interacts with the FxxxFxxxF motif of DRD1 via its C-terminal domain. Interacts with pestivirus nonstructural protein NS2.

The protein localises to the endoplasmic reticulum membrane. Functionally, regulates the export of target proteins, such as DRD1, from the endoplasmic reticulum to the cell surface. Promotes cleavage of pestivirus polyprotein. The protein is DnaJ homolog subfamily C member 14 (DNAJC14) of Bos taurus (Bovine).